The chain runs to 206 residues: Undecaprenyl-diphosphatase (206 aa).

Transmembrane regions (helical) follow at residues 5 to 25, 53 to 73, 79 to 99, 138 to 158, and 164 to 184; these read YYWILLLLFLILSIYIKLIGG, FLSKYGREYVWIPVTALLLIF, IGITLVISFVIAIVLGEVSKY, VTLLLTSPKWMWILGIIEAVL, and VYVGVHWPLDVIAGWLLGSWI.

Its subcellular location is the cell membrane. The enzyme catalyses di-trans,octa-cis-undecaprenyl diphosphate + H2O = di-trans,octa-cis-undecaprenyl phosphate + phosphate + H(+). This Sulfolobus acidocaldarius (strain ATCC 33909 / DSM 639 / JCM 8929 / NBRC 15157 / NCIMB 11770) protein is Undecaprenyl-diphosphatase (sepP).